The chain runs to 197 residues: Holliday junction branch migration complex subunit RuvA (197 aa).

The segment at 1–65 (MISQVRGTIM…EDAWHLYGFA (65 aa)) is domain I. Residues 66 to 140 (HAYERAVFQK…DKIDAVGPAP (75 aa)) are domain II. Positions 140–144 (PATGT) are flexible linker. Residues 145-197 (APSPLGDDAVRALIALGYNQTEADRAVRAVVESGAPKDVSSLVRGALSRLTAK) form a domain III region.

It belongs to the RuvA family. Homotetramer. Forms an RuvA(8)-RuvB(12)-Holliday junction (HJ) complex. HJ DNA is sandwiched between 2 RuvA tetramers; dsDNA enters through RuvA and exits via RuvB. An RuvB hexamer assembles on each DNA strand where it exits the tetramer. Each RuvB hexamer is contacted by two RuvA subunits (via domain III) on 2 adjacent RuvB subunits; this complex drives branch migration. In the full resolvosome a probable DNA-RuvA(4)-RuvB(12)-RuvC(2) complex forms which resolves the HJ.

The protein localises to the cytoplasm. Its function is as follows. The RuvA-RuvB-RuvC complex processes Holliday junction (HJ) DNA during genetic recombination and DNA repair, while the RuvA-RuvB complex plays an important role in the rescue of blocked DNA replication forks via replication fork reversal (RFR). RuvA specifically binds to HJ cruciform DNA, conferring on it an open structure. The RuvB hexamer acts as an ATP-dependent pump, pulling dsDNA into and through the RuvAB complex. HJ branch migration allows RuvC to scan DNA until it finds its consensus sequence, where it cleaves and resolves the cruciform DNA. The sequence is that of Holliday junction branch migration complex subunit RuvA from Gemmatimonas aurantiaca (strain DSM 14586 / JCM 11422 / NBRC 100505 / T-27).